We begin with the raw amino-acid sequence, 255 residues long: 5'-nucleotidase SurE (255 aa).

A divalent metal cation-binding residues include Asp-8, Asp-9, Ser-40, and Asn-93.

It belongs to the SurE nucleotidase family. A divalent metal cation serves as cofactor.

It localises to the cytoplasm. It carries out the reaction a ribonucleoside 5'-phosphate + H2O = a ribonucleoside + phosphate. Functionally, nucleotidase that shows phosphatase activity on nucleoside 5'-monophosphates. This chain is 5'-nucleotidase SurE, found in Rhodopseudomonas palustris (strain BisB18).